Here is a 484-residue protein sequence, read N- to C-terminus: Poly(A) RNA polymerase GLD2 (484 aa).

2 positions are modified to phosphoserine: S62 and S69. The short motif at 76-92 (KRLSDEKNLPLDGKRQR) is the Nuclear localization signal element. The residue at position 95 (S95) is a Phosphoserine. Mg(2+)-binding residues include D213 and D215. Residues 386-440 (NLGDLLLGFLKYYATEFDWNSQMISVREAKAIPRPDGIEWRNKYICVEEPFDGTN) enclose the PAP-associated domain.

The protein belongs to the DNA polymerase type-B-like family. GLD2 subfamily. In terms of assembly, interacts with CPEB1, CPEB2, CPSF1 and PABPC1. Interacts with QKI isoform QKI7; promoting recruitment to miRNA miR-122 and miR-122 stabilization. Requires Mg(2+) as cofactor. The cofactor is Mn(2+).

The protein resides in the cytoplasm. It localises to the nucleus. The enzyme catalyses RNA(n) + ATP = RNA(n)-3'-adenine ribonucleotide + diphosphate. Its function is as follows. Cytoplasmic poly(A) RNA polymerase that adds successive AMP monomers to the 3'-end of specific RNAs, forming a poly(A) tail. In contrast to the canonical nuclear poly(A) RNA polymerase, it only adds poly(A) to selected cytoplasmic mRNAs. Does not play a role in replication-dependent histone mRNA degradation. Adds a single nucleotide to the 3' end of specific miRNAs, monoadenylation stabilizes and prolongs the activity of some but not all miRNAs. The sequence is that of Poly(A) RNA polymerase GLD2 from Bos taurus (Bovine).